The following is an 86-amino-acid chain: Mu-theraphotoxin-Hhn1c (86 aa).

The signal sequence occupies residues 1–21 (MKASMFLALAGLALLFVVCYA). Positions 22–49 (SESEEKEFSNELLSSVLAVDDNSKGEER) are excised as a propeptide. 3 cysteine pairs are disulfide-bonded: cysteine 51–cysteine 66, cysteine 58–cysteine 73, and cysteine 65–cysteine 80. Isoleucine amide is present on isoleucine 84.

Belongs to the neurotoxin 10 (Hwtx-1) family. 22 (Htx-4) subfamily. Monomer. As to expression, expressed by the venom gland.

It is found in the secreted. Functionally, neurotoxin. Selectively blocks neuronal tetrodotoxin-sensitive voltage-gated sodium channels (Nav). Does not affect tetrodotoxin-resistant voltage-gated sodium channels or calcium channels. The sequence is that of Mu-theraphotoxin-Hhn1c from Cyriopagopus hainanus (Chinese bird spider).